The primary structure comprises 459 residues: ATP synthase subunit beta (459 aa).

147–154 (GGAGVGKT) is an ATP binding site.

Belongs to the ATPase alpha/beta chains family. F-type ATPases have 2 components, CF(1) - the catalytic core - and CF(0) - the membrane proton channel. CF(1) has five subunits: alpha(3), beta(3), gamma(1), delta(1), epsilon(1). CF(0) has three main subunits: a(1), b(2) and c(9-12). The alpha and beta chains form an alternating ring which encloses part of the gamma chain. CF(1) is attached to CF(0) by a central stalk formed by the gamma and epsilon chains, while a peripheral stalk is formed by the delta and b chains.

The protein localises to the cell inner membrane. It catalyses the reaction ATP + H2O + 4 H(+)(in) = ADP + phosphate + 5 H(+)(out). Its function is as follows. Produces ATP from ADP in the presence of a proton gradient across the membrane. The catalytic sites are hosted primarily by the beta subunits. The chain is ATP synthase subunit beta from Hydrogenovibrio crunogenus (strain DSM 25203 / XCL-2) (Thiomicrospira crunogena).